The sequence spans 309 residues: Dihydroorotate dehydrogenase B (NAD(+)), catalytic subunit (309 aa).

Residues Ser-21 and 45–46 (KA) each bind FMN. Residues Lys-45 and 69–73 (NAIGL) contribute to the substrate site. Residues Asn-99 and Asn-127 each contribute to the FMN site. Asn-127 contacts substrate. Cys-130 (nucleophile) is an active-site residue. Lys-165 and Ile-191 together coordinate FMN. Residue 192–193 (NT) participates in substrate binding. FMN contacts are provided by residues Gly-217, 243–244 (GG), and 265–266 (GT).

The protein belongs to the dihydroorotate dehydrogenase family. Type 1 subfamily. As to quaternary structure, heterotetramer of 2 PyrK and 2 PyrD type B subunits. The cofactor is FMN.

The protein resides in the cytoplasm. It catalyses the reaction (S)-dihydroorotate + NAD(+) = orotate + NADH + H(+). It participates in pyrimidine metabolism; UMP biosynthesis via de novo pathway; orotate from (S)-dihydroorotate (NAD(+) route): step 1/1. Functionally, catalyzes the conversion of dihydroorotate to orotate with NAD(+) as electron acceptor. The chain is Dihydroorotate dehydrogenase B (NAD(+)), catalytic subunit (pyrD) from Bacillus cereus (strain AH187).